A 491-amino-acid polypeptide reads, in one-letter code: uncharacterized protein (491 aa).

Residues 1–92 (MSFVIASPEA…GGGSYASAEI (92 aa)) form the PE domain. Disordered regions lie at residues 114 to 156 (PLVG…AGGA), 376 to 400 (AGGS…GNPG), and 419 to 491 (AGQG…GPDG). Residues 128 to 145 (GQPGGDGGILWGNGGNGG) show a composition bias toward gly residues. The segment covering 432–480 (GGPGGVGGHGGTAILFGDGGAGGAGAAGGPGTPDGAAGPGGSGGTGGLL) has biased composition (gly residues).

Belongs to the mycobacterial PE family. PGRS subfamily.

This is an uncharacterized protein from Mycobacterium bovis (strain ATCC BAA-935 / AF2122/97).